The primary structure comprises 325 residues: Putative 1-aminocyclopropane-1-carboxylate deaminase (325 aa).

K54 carries the post-translational modification N6-(pyridoxal phosphate)lysine.

Belongs to the ACC deaminase/D-cysteine desulfhydrase family. Pyridoxal 5'-phosphate serves as cofactor.

The enzyme catalyses 1-aminocyclopropane-1-carboxylate + H2O = 2-oxobutanoate + NH4(+). The protein is Putative 1-aminocyclopropane-1-carboxylate deaminase of Pyrococcus horikoshii (strain ATCC 700860 / DSM 12428 / JCM 9974 / NBRC 100139 / OT-3).